We begin with the raw amino-acid sequence, 285 residues long: Protease HtpX homolog (285 aa).

The next 2 helical transmembrane spans lie at 7-27 (TAMLMAAITALFIVIGGMIGG) and 30-50 (GMTIALVIALGMNFFSYWFSD). H131 lines the Zn(2+) pocket. The active site involves E132. H135 is a Zn(2+) binding site. 2 helical membrane passes run 141 to 161 (ILISTISATMAGAISALANFA) and 177 to 197 (IAGIAVALLAPIAGALIQMAI). Zn(2+) is bound at residue E202.

The protein belongs to the peptidase M48B family. Zn(2+) serves as cofactor.

It localises to the cell inner membrane. The chain is Protease HtpX homolog from Paraburkholderia phytofirmans (strain DSM 17436 / LMG 22146 / PsJN) (Burkholderia phytofirmans).